The chain runs to 947 residues: Protein NETWORKED 2A (947 aa).

Residues 10 to 90 enclose the NAB domain; the sequence is YSWWWASHIR…ERYDHLSREL (81 aa). The segment at 105-131 is disordered; the sequence is VQFPLEDDSDENEDYDGRPRKPPKHLH. Over residues 109–118 the composition is skewed to acidic residues; it reads LEDDSDENED. Coiled coils occupy residues 348–454 and 568–619; these read KLAE…IQDV and VLRD…QKLD. Composition is skewed to basic and acidic residues over residues 618–627 and 635–644; these read LDTTGKDSPH and LEHEQGHHET. 3 disordered regions span residues 618–675, 743–763, and 911–947; these read LDTT…RTKS, RIESKQQQESPRSSSNTAVAS, and KNRQQKQSASSLFSCVSPSPGLHKQSSYSRPPGKLPE. Positions 645–660 are enriched in polar residues; it reads VSISPTSNFSVATTPH. Residues 662 to 675 are compositionally biased toward basic and acidic residues; that stretch reads QVGDVKRTPGRTKS. The stretch at 722–809 forms a coiled coil; sequence VHQIQKYQTT…LANIQEEIAR (88 aa). Polar residues-rich tracts occupy residues 749–761 and 915–927; these read QQESPRSSSNTAV and QKQSASSLFSCVS.

The protein belongs to the NET family. Expressed specifically in pollen.

Its subcellular location is the cell membrane. Its function is as follows. Plant-specific actin binding protein. Associates with F-actin at the plasma membrane in growing pollen tubes. May be part of a membrane-cytoskeletal adapter complex. The sequence is that of Protein NETWORKED 2A from Arabidopsis thaliana (Mouse-ear cress).